A 62-amino-acid polypeptide reads, in one-letter code: Large ribosomal subunit protein bL28 (62 aa).

This sequence belongs to the bacterial ribosomal protein bL28 family.

In Acholeplasma laidlawii (strain PG-8A), this protein is Large ribosomal subunit protein bL28.